Consider the following 161-residue polypeptide: Small ribosomal subunit protein uS9 (161 aa).

It belongs to the universal ribosomal protein uS9 family.

The chain is Small ribosomal subunit protein uS9 from Bartonella tribocorum (strain CIP 105476 / IBS 506).